The sequence spans 97 residues: Thiosulfate sulfurtransferase/rhodanese-like domain-containing protein 3 (97 aa).

In terms of domain architecture, Rhodanese spans 32–84 (YKELKNLLNSKNIMLIDVREIWEILEYQKIPESINVPLDEVGEALQMNPRDFK). Lys-84 is modified (N6-succinyllysine).

This chain is Thiosulfate sulfurtransferase/rhodanese-like domain-containing protein 3 (TSTD3), found in Homo sapiens (Human).